A 449-amino-acid chain; its full sequence is Mycosin-1 (449 aa).

The N-terminal stretch at 1–23 is a signal peptide; that stretch reads MQRVAVMVLAVLLALFSAPPAWA. A disulfide bridge connects residues Cys51 and Cys120. In terms of domain architecture, Peptidase S8 spans 66–389; that stretch reads PWANDYLRIQ…AGVIDPVAAL (324 aa). Active-site charge relay system residues include Asp92 and His123. Disordered stretches follow at residues 160–179 and 240–259; these read FQPKGARQDPNDPNTTQTAG and TGQDCSQNPPPDPSVPSDPR. Residues 170 to 179 are compositionally biased toward polar residues; the sequence is NDPNTTQTAG. A disulfide bond links Cys206 and Cys244. Ser334 (charge relay system) is an active-site residue. The helical transmembrane segment at 421 to 441 threads the bilayer; it reads ITAVVIAGATLAFALGIGALA.

It belongs to the peptidase S8 family.

It is found in the cell membrane. Functionally, may play a dual role in regulation of ESX-1 secretion and virulence. Acts as a protease that cleaves EspB. This chain is Mycosin-1, found in Mycolicibacterium smegmatis (strain ATCC 700084 / mc(2)155) (Mycobacterium smegmatis).